The chain runs to 679 residues: Leucine-rich repeat, immunoglobulin-like domain and transmembrane domain-containing protein 3 (679 aa).

The signal sequence occupies residues 1-19 (MHLFACLCIVLSFLEGVGC). Topologically, residues 20–582 (LCPSQCTCDY…RVEGDDSQWS (563 aa)) are lumenal. LRR repeat units follow at residues 56–79 (PVDTVKLRIEKTVIRRISAEAFYY), 80–103 (LVELQYLWVTYNSVASIDPSSFYN), 104–128 (LKQLHELRLDGNSLAAFPWASLLDM), 129–151 (PLLRTLDLHNNKITSVPNEALRY), and 152–175 (LKNLAYLDLSSNRLTTLPPDFLES). The LRRCT domain occupies 201 to 253 (NPWFCDCHISKMIELSKVVDPAIVLLDPLMTCSEPERLTGILFQRAELEHCLK). Residues 254–344 (PSVMTSATKI…GMSEAVVTVT (91 aa)) form the Ig-like domain. Residues Cys275 and Cys328 are joined by a disulfide bond. An N-linked (GlcNAc...) asparagine glycan is attached at Asn296. The interval 351–375 (TPIPPDTSERTGDHPEWDVQPGSGR) is disordered. A compositionally biased stretch (basic and acidic residues) spans 357–367 (TSERTGDHPEW). The region spanning 486–574 (AIENLRVVSE…QCITFSTERV (89 aa)) is the Fibronectin type-III domain. The helical transmembrane segment at 583–603 (LLLVVTSTACVVILPLICFLL) threads the bilayer. The Cytoplasmic segment spans residues 604-679 (YKVCKLQCKS…SEGSRPEYYC (76 aa)).

Glycosylated. In terms of tissue distribution, detected in the outer plexiform layer (OPL) of the retina where it localizes to ON-bipolar cells (at protein level).

It is found in the cell projection. The protein resides in the dendrite. Its subcellular location is the perikaryon. It localises to the endoplasmic reticulum membrane. Plays a role in the synapse formation and synaptic transmission between cone photoreceptor cells and retinal bipolar cells. Required for normal transmission of a light-evoked stimulus from the cone photoreceptor cells to the ON-bipolar cells and ON-ganglion cells in the inner retina. Required in retinal ON-bipolar cells for normal localization of the cation channel TRPM1 at dendrite tips. Seems to play a specific role in synaptic contacts made by ON-bipolar cells with cone photoreceptor pedicles. May also have a role in cone synapse formation. Might facilitate FGFR1 exit from the endoplasmic reticulum to the Golgi. Could be a regulator of the FGFRs. The polypeptide is Leucine-rich repeat, immunoglobulin-like domain and transmembrane domain-containing protein 3 (LRIT3) (Homo sapiens (Human)).